The primary structure comprises 494 residues: Glutamate decarboxylase 5 (494 aa).

Lys-276 is modified (N6-(pyridoxal phosphate)lysine).

The protein belongs to the group II decarboxylase family. Homohexamer. Interacts with calmodulin. Pyridoxal 5'-phosphate is required as a cofactor. Expressed in flowers.

It catalyses the reaction L-glutamate + H(+) = 4-aminobutanoate + CO2. Catalyzes the production of GABA. The calmodulin-binding is calcium-dependent and it is proposed that this may, directly or indirectly, form a calcium regulated control of GABA biosynthesis. This Arabidopsis thaliana (Mouse-ear cress) protein is Glutamate decarboxylase 5 (GAD5).